The sequence spans 423 residues: Ribosome biogenesis protein WDR12 homolog (423 aa).

The tract at residues Val-10–Glu-93 is ubiquitin-like (UBL) domain. 7 WD repeats span residues Leu-105–Ile-142, Gly-144–Glu-186, Gly-193–Asp-232, Gly-253–Glu-291, Ser-293–Val-332, Gly-338–Tyr-378, and Gly-382–Met-420.

The protein belongs to the WD repeat WDR12/YTM1 family.

Its subcellular location is the nucleus. It localises to the nucleolus. The protein localises to the nucleoplasm. In terms of biological role, required for maturation of ribosomal RNAs and formation of the large ribosomal subunit. The polypeptide is Ribosome biogenesis protein WDR12 homolog (Drosophila willistoni (Fruit fly)).